The primary structure comprises 722 residues: MCFFIGLVPPGYKYLGPGNSLDQGEPTNPSDAAAKEHDEAYAAYLRSGKNPYLYFSPADQRFIDQTKDATDWGGKIGHYFFRAKKAIAPVLTDTPDHPSTSRPTKPTKRSKPPPHIFINLAKKKKAGAGQVKRDNLAPMSDGAVQPDGGQPAVRNERATGSGNGSGGGGGGGSGGVGISTGTFNNQTEFKFLENGWVEITANSSRLVHLNMPESENYKRVVVNNMDKTAVKGNMALDDTHVQIVTPWSLVDANAWGVWFNPGDWQLIVNTMSELHLVSFEQEIFNVVLKTVSESATQPPTKVYNNDLTASLMVALDSNNTMPFTPAAMRSETLGFYPWKPTIPTPWRYYFQWDRTLIPSHTGTSGTPTNIYHGTDPDDVQFYTIENSVPVHLLRTGDEFATGTFFFDCKPCRLTHTWQTNRALGLPPFLNSLPQSEGATNFGDIGVQQDKRRGVTQMGNTDYITEATIMRPAEVGYSAPYYSFEASTQGPFKTPIAAGRGGAQTDENQAADGDPRYAFGRQHGQKTTTTGETPERFTYIAHQDTGRYPAGDWIQNINFNLPVTNDNVLLPTDPIGGKTGINYTNIFNTYGPLTALNNVPPVYPNGQIWDKEFDTDLKPRLHVNAPFVCQNNCPGQLFVKVAPNLTNEYDPDASANMSRIVTYSDFWWKGKLVFKAKLRASHTWNPIQQMSINVDNQFNYLPNNIGAMKIVYEKSQLAPRKLY.

The segment at 14 to 59 (YLGPGNSLDQGEPTNPSDAAAKEHDEAYAAYLRSGKNPYLYFSPAD) is phospholipase A2-like. Disordered stretches follow at residues 90–115 (VLTD…PPPH), 136–179 (LAPM…VGIS), and 497–531 (AGRG…TTGE). Residues 161 to 178 (SGNGSGGGGGGGSGGVGI) show a composition bias toward gly residues.

The protein belongs to the parvoviridae capsid protein family.

The protein localises to the virion. Its function is as follows. Capsid protein self-assembles to form an icosahedral capsid with a T=1 symmetry, about 22 nm in diameter, and consisting of 60 copies of two size variants of the capsid proteins, VP1 and VP2, which differ by the presence of an N-terminal extension in the minor protein VP1. The capsid encapsulates the genomic ssDNA. Capsid proteins are responsible for the attachment to host cell receptors. This attachment induces virion internalization predominantly through clathrin-dependent endocytosis. Binding to the host receptors also induces capsid rearrangements leading to surface exposure of VP1 N-terminus, specifically its phospholipase A2-like region and putative nuclear localization signal(s). VP1 N-terminus might serve as a lipolytic enzyme to breach the endosomal membrane during entry into host cell and might contribute to virus transport to the nucleus. The chain is Capsid protein VP1 from Neovison vison (American mink).